The chain runs to 155 residues: Protein-export protein SecB (155 aa).

This sequence belongs to the SecB family. As to quaternary structure, homotetramer, a dimer of dimers. One homotetramer interacts with 1 SecA dimer.

The protein localises to the cytoplasm. Functionally, one of the proteins required for the normal export of preproteins out of the cell cytoplasm. It is a molecular chaperone that binds to a subset of precursor proteins, maintaining them in a translocation-competent state. It also specifically binds to its receptor SecA. The protein is Protein-export protein SecB of Citrobacter koseri (strain ATCC BAA-895 / CDC 4225-83 / SGSC4696).